We begin with the raw amino-acid sequence, 159 residues long: Na(+)/H(+) antiporter subunit E1 (159 aa).

A run of 4 helical transmembrane segments spans residues 1-21, 27-47, 60-80, and 101-121; these read MAIQ…VTNS, FVLG…VLPG, LIIT…KIIL, and WQLV…VLGI.

This sequence belongs to the CPA3 antiporters (TC 2.A.63) subunit E family. May form a heterooligomeric complex that consists of seven subunits: mnhA1, mnhB1, mnhC1, mnhD1, mnhE1, mnhF1 and mnhG1.

It is found in the cell membrane. Its function is as follows. Mnh complex is a Na(+)/H(+) antiporter involved in Na(+) excretion. This chain is Na(+)/H(+) antiporter subunit E1 (mnhE1), found in Staphylococcus epidermidis (strain ATCC 35984 / DSM 28319 / BCRC 17069 / CCUG 31568 / BM 3577 / RP62A).